The primary structure comprises 117 residues: Aspartate 1-decarboxylase (117 aa).

The Schiff-base intermediate with substrate; via pyruvic acid role is filled by Ser25. Ser25 is subject to Pyruvic acid (Ser). A substrate-binding site is contributed by Thr57. Tyr58 serves as the catalytic Proton donor. Residue 72 to 74 (GAA) participates in substrate binding.

Belongs to the PanD family. In terms of assembly, heterooctamer of four alpha and four beta subunits. Pyruvate is required as a cofactor. Is synthesized initially as an inactive proenzyme, which is activated by self-cleavage at a specific serine bond to produce a beta-subunit with a hydroxyl group at its C-terminus and an alpha-subunit with a pyruvoyl group at its N-terminus.

The protein resides in the cytoplasm. The catalysed reaction is L-aspartate + H(+) = beta-alanine + CO2. The protein operates within cofactor biosynthesis; (R)-pantothenate biosynthesis; beta-alanine from L-aspartate: step 1/1. In terms of biological role, catalyzes the pyruvoyl-dependent decarboxylation of aspartate to produce beta-alanine. The protein is Aspartate 1-decarboxylase of Helicobacter pylori (strain J99 / ATCC 700824) (Campylobacter pylori J99).